A 507-amino-acid chain; its full sequence is Cytochrome P450 monooxygenase nodZ (507 aa).

2 consecutive transmembrane segments (helical) span residues 1 to 21 (MITA…FSLL) and 205 to 225 (GFLH…PWFL). Asn352 carries an N-linked (GlcNAc...) asparagine glycan. Cys445 is a binding site for heme.

This sequence belongs to the cytochrome P450 family. Requires heme as cofactor.

It localises to the membrane. It participates in secondary metabolite biosynthesis. Functionally, cytochrome P450 monooxygenase; part of the gene cluster that mediates the biosynthesis of the indole diterpenes nodulisporic acids (NA). Nodulisporic acid A (NAA) and its chemically modified derivatives are of particular significance because of their highly potent insecticidal activity against blood-feeding arthropods and lack of observable adverse effects on mammals, in particular the tremogenicity associated with the paspaline-derived IDTs is not observed. The geranylgeranyl diphosphate (GGPP) synthase ggs1, localized outside of the cluster, is proposed to catalyze the first step in nodulisporic acid biosynthesis via conversion of farnesyl pyrophosphate and isopentyl pyrophosphate into geranylgeranyl pyrophosphate (GGPP). Condensation of indole-3-glycerol phosphate with GGPP by the prenyl transferase nodC then forms 3-geranylgeranylindole (3-GGI). Epoxidation by the FAD-dependent monooxygenase nodM leads to a single-epoxidized-GGI that is substrate of the terpene cyclase nodB for cyclization to yield emindole SB. The terminal methyl carbon, C28, of emindole SB is then oxidized by the cytochrome P450 monooxygenase nodW to produce nodulisporic acid F (NAF), the pentacyclic core of NAA. NAF is converted to nodulisporic acid E (NAE) via prenylation. This step is probably performed by one of the indole diterpene prenyltransferases nodD1 or nodD2. Several oxidation steps performed by the FAD-linked oxidoreductase nodO and one of the cytochrome P450 monooxygenase nodR, nodX or nodZ further convert NAE to nodulisporic acid D (NAD). NAD is substrate of cytochrome P450 monooxygenase nodJ to produce the precursor of nodulisporic acid C (NAC), converted to NAC by one of the indole diterpene prenyltransferases nodD1 or nodD2. The FAD-dependent monooxygenase nodY2 then oxidizes NAC to nodulisporic acid B (NAB). Finally NAB is converted to NAA by one of the cytochrome P450 monooxygenases nodR, nodX or nodZ. This is Cytochrome P450 monooxygenase nodZ from Hypoxylon pulicicidum.